We begin with the raw amino-acid sequence, 130 residues long: Small ribosomal subunit protein uS9 (130 aa).

The segment at 108–130 is disordered; that stretch reads SREKERKKYGQRGARARFQYSKR.

This sequence belongs to the universal ribosomal protein uS9 family.

The sequence is that of Small ribosomal subunit protein uS9 from Solidesulfovibrio magneticus (strain ATCC 700980 / DSM 13731 / RS-1) (Desulfovibrio magneticus).